The following is a 151-amino-acid chain: MTFRKTSLVLLLLLSIDCIVKSEITSAQTPRCLAANNSFPRSVMVTLSIRNWNTSSKRASDYYNRSTSPWTLYRNEDQDRYPSVIWEAKCRYLGCVNADGNVDYHMNSVPIQQEILVVRKGHNPCPNSFRLEKMLVTVGCTCVTPIVHNVD.

An N-terminal signal peptide occupies residues 1–22 (MTFRKTSLVLLLLLSIDCIVKS). Residues N36, N53, and N64 are each glycosylated (N-linked (GlcNAc...) asparagine; by host). Intrachain disulfides connect C90-C140 and C95-C142.

This sequence belongs to the IL-17 family.

It is found in the secreted. The protein is Viral interleukin-17 (13) of Saimiri sciureus (Common squirrel monkey).